The following is a 338-amino-acid chain: Ketol-acid reductoisomerase (NADP(+)) (338 aa).

In terms of domain architecture, KARI N-terminal Rossmann spans 1–181 (MNVFYDKDAD…GGGRAGIIET (181 aa)). NADP(+)-binding positions include 24 to 27 (YGSQ), Arg-47, and Ser-52. His-107 is an active-site residue. Gly-133 serves as a coordination point for NADP(+). The 146-residue stretch at 182–327 (NFREETETDL…AKLRAMMPWI (146 aa)) folds into the KARI C-terminal knotted domain. The Mg(2+) site is built by Asp-190, Glu-194, Glu-226, and Glu-230. Ser-251 contributes to the substrate binding site.

This sequence belongs to the ketol-acid reductoisomerase family. Mg(2+) is required as a cofactor.

It carries out the reaction (2R)-2,3-dihydroxy-3-methylbutanoate + NADP(+) = (2S)-2-acetolactate + NADPH + H(+). The enzyme catalyses (2R,3R)-2,3-dihydroxy-3-methylpentanoate + NADP(+) = (S)-2-ethyl-2-hydroxy-3-oxobutanoate + NADPH + H(+). It participates in amino-acid biosynthesis; L-isoleucine biosynthesis; L-isoleucine from 2-oxobutanoate: step 2/4. The protein operates within amino-acid biosynthesis; L-valine biosynthesis; L-valine from pyruvate: step 2/4. Involved in the biosynthesis of branched-chain amino acids (BCAA). Catalyzes an alkyl-migration followed by a ketol-acid reduction of (S)-2-acetolactate (S2AL) to yield (R)-2,3-dihydroxy-isovalerate. In the isomerase reaction, S2AL is rearranged via a Mg-dependent methyl migration to produce 3-hydroxy-3-methyl-2-ketobutyrate (HMKB). In the reductase reaction, this 2-ketoacid undergoes a metal-dependent reduction by NADPH to yield (R)-2,3-dihydroxy-isovalerate. The chain is Ketol-acid reductoisomerase (NADP(+)) from Burkholderia multivorans (strain ATCC 17616 / 249).